We begin with the raw amino-acid sequence, 354 residues long: Sulfate/thiosulfate import ATP-binding protein CysA 2 (354 aa).

An ABC transporter domain is found at 3 to 237 (IHIQQVNKHF…PSNPFVYEFL (235 aa)). ATP is bound at residue 35-42 (GPSGSGKT).

Belongs to the ABC transporter superfamily. Sulfate/tungstate importer (TC 3.A.1.6) family. The complex is composed of two ATP-binding proteins (CysA), two transmembrane proteins (CysT and CysW) and a solute-binding protein (CysP).

It is found in the cell inner membrane. It catalyses the reaction sulfate(out) + ATP + H2O = sulfate(in) + ADP + phosphate + H(+). The catalysed reaction is thiosulfate(out) + ATP + H2O = thiosulfate(in) + ADP + phosphate + H(+). In terms of biological role, part of the ABC transporter complex CysAWTP involved in sulfate/thiosulfate import. Responsible for energy coupling to the transport system. This Shewanella oneidensis (strain ATCC 700550 / JCM 31522 / CIP 106686 / LMG 19005 / NCIMB 14063 / MR-1) protein is Sulfate/thiosulfate import ATP-binding protein CysA 2.